The chain runs to 90 residues: Small ribosomal subunit protein uS15 (90 aa).

Belongs to the universal ribosomal protein uS15 family. In terms of assembly, part of the 30S ribosomal subunit. Forms a bridge to the 50S subunit in the 70S ribosome, contacting the 23S rRNA.

Its function is as follows. One of the primary rRNA binding proteins, it binds directly to 16S rRNA where it helps nucleate assembly of the platform of the 30S subunit by binding and bridging several RNA helices of the 16S rRNA. Forms an intersubunit bridge (bridge B4) with the 23S rRNA of the 50S subunit in the ribosome. This chain is Small ribosomal subunit protein uS15, found in Wolbachia pipientis subsp. Culex pipiens (strain wPip).